The primary structure comprises 293 residues: Glutamyl-Q tRNA(Asp) synthetase (293 aa).

L-glutamate contacts are provided by residues 26 to 30 (RYAPS) and D62. The 'HIGH' region signature appears at 29–39 (PSPTGALHLGN). Zn(2+)-binding residues include C118, C120, Y131, and C135. 2 residues coordinate L-glutamate: Y178 and R196. The 'KMSKS' region motif lies at 234-238 (KLSKR). Residue K237 participates in ATP binding.

The protein belongs to the class-I aminoacyl-tRNA synthetase family. GluQ subfamily. It depends on Zn(2+) as a cofactor.

In terms of biological role, catalyzes the tRNA-independent activation of glutamate in presence of ATP and the subsequent transfer of glutamate onto a tRNA(Asp). Glutamate is transferred on the 2-amino-5-(4,5-dihydroxy-2-cyclopenten-1-yl) moiety of the queuosine in the wobble position of the QUC anticodon. This Parasynechococcus marenigrum (strain WH8102) protein is Glutamyl-Q tRNA(Asp) synthetase.